A 240-amino-acid chain; its full sequence is Uridylate kinase (240 aa).

13–16 (KASG) contributes to the ATP binding site. An involved in allosteric activation by GTP region spans residues 21–26 (GSQGFG). G55 serves as a coordination point for UMP. Residues G56 and R60 each coordinate ATP. UMP-binding positions include D75 and 136–143 (TGNPFFTT). ATP is bound by residues T163, Q164, Y169, and D172.

Belongs to the UMP kinase family. As to quaternary structure, homohexamer.

The protein localises to the cytoplasm. The enzyme catalyses UMP + ATP = UDP + ADP. It participates in pyrimidine metabolism; CTP biosynthesis via de novo pathway; UDP from UMP (UMPK route): step 1/1. Its activity is regulated as follows. Allosterically activated by GTP. Inhibited by UTP. Catalyzes the reversible phosphorylation of UMP to UDP. The sequence is that of Uridylate kinase from Brucella suis biovar 1 (strain 1330).